A 318-amino-acid chain; its full sequence is Putative 2-hydroxyacid dehydrogenase SH0752 (318 aa).

NAD(+) contacts are provided by residues 155–156, 234–236, and Asp-260; these read EI and AGR. Arg-236 is an active-site residue. Glu-265 is a catalytic residue. Catalysis depends on His-283, which acts as the Proton donor. 283–286 contributes to the NAD(+) binding site; it reads HIGN.

This sequence belongs to the D-isomer specific 2-hydroxyacid dehydrogenase family.

The sequence is that of Putative 2-hydroxyacid dehydrogenase SH0752 from Staphylococcus haemolyticus (strain JCSC1435).